Consider the following 1238-residue polypeptide: Erythroid differentiation-related factor 1 (1238 aa).

4 disordered regions span residues 1–38 (MGDAKEAGAEGPPAGAAARGGLSLLSQGESEESSAQGS), 220–268 (QPVS…GSEP), 517–561 (PKKE…SDDS), and 620–647 (KKESDLPAADPSTPIPLKYEDESSRGGP). 3 stretches are compositionally biased toward low complexity: residues 9–38 (AEGPPAGAAARGGLSLLSQGESEESSAQGS), 223–241 (SSTAEQQESSSSDQTNDSE), and 253–263 (SSVSEDPSASS). Positions 530-547 (NSDESYSEEEEEMPDSDE) are enriched in acidic residues. 2 TPR repeats span residues 693–726 (SKAYYVLSDAAMSLQKYGRALRYIKLALQSHDTY) and 914–953 (AQAHCGAGDELKREFSPEEGLYYNKAIDYYLKALRSLGTR).

It is found in the nucleus. In terms of biological role, transcription factor involved in erythroid differentiation. Involved in transcriptional activation of the globin gene. The chain is Erythroid differentiation-related factor 1 (EDRF1) from Homo sapiens (Human).